The following is a 72-amino-acid chain: Large ribosomal subunit protein bL28 (72 aa).

It belongs to the bacterial ribosomal protein bL28 family.

This chain is Large ribosomal subunit protein bL28, found in Pelodictyon phaeoclathratiforme (strain DSM 5477 / BU-1).